The primary structure comprises 149 residues: Large ribosomal subunit protein bL9 (149 aa).

The protein belongs to the bacterial ribosomal protein bL9 family.

In terms of biological role, binds to the 23S rRNA. This chain is Large ribosomal subunit protein bL9, found in Xanthomonas campestris pv. campestris (strain 8004).